A 188-amino-acid polypeptide reads, in one-letter code: Protein GrpE (188 aa).

Residues 1–24 (MSDENKPGEAAELDAGVAPEAQPE) are disordered.

This sequence belongs to the GrpE family. As to quaternary structure, homodimer.

It is found in the cytoplasm. In terms of biological role, participates actively in the response to hyperosmotic and heat shock by preventing the aggregation of stress-denatured proteins, in association with DnaK and GrpE. It is the nucleotide exchange factor for DnaK and may function as a thermosensor. Unfolded proteins bind initially to DnaJ; upon interaction with the DnaJ-bound protein, DnaK hydrolyzes its bound ATP, resulting in the formation of a stable complex. GrpE releases ADP from DnaK; ATP binding to DnaK triggers the release of the substrate protein, thus completing the reaction cycle. Several rounds of ATP-dependent interactions between DnaJ, DnaK and GrpE are required for fully efficient folding. The polypeptide is Protein GrpE (Hyphomonas neptunium (strain ATCC 15444)).